The sequence spans 122 residues: Large ribosomal subunit protein uL14 (122 aa).

The protein belongs to the universal ribosomal protein uL14 family. In terms of assembly, part of the 50S ribosomal subunit. Forms a cluster with proteins L3 and L19. In the 70S ribosome, L14 and L19 interact and together make contacts with the 16S rRNA in bridges B5 and B8.

Binds to 23S rRNA. Forms part of two intersubunit bridges in the 70S ribosome. This is Large ribosomal subunit protein uL14 from Staphylococcus haemolyticus (strain JCSC1435).